Consider the following 513-residue polypeptide: Pantetheinase (513 aa).

Positions 1 to 21 (MTTQLPAYVAILLFYVSRASC) are cleaved as a signal peptide. Residue Asn38 is glycosylated (N-linked (GlcNAc...) asparagine). One can recognise a CN hydrolase domain in the interval 39–306 (ATLTPVSREE…GKLLLSQLDS (268 aa)). The active-site Proton acceptor is the Glu79. N-linked (GlcNAc...) asparagine glycosylation is present at Asn130. Lys178 functions as the Proton donor in the catalytic mechanism. Asn200 carries N-linked (GlcNAc...) asparagine glycosylation. Catalysis depends on Cys211, which acts as the Nucleophile. Residues Asn283, Asn315, and Asn353 are each glycosylated (N-linked (GlcNAc...) asparagine). A lipid anchor (GPI-anchor amidated glycine) is attached at Gly491. A propeptide spans 492–513 (LTAQARIIMLIVIAPIVCSLSW) (removed in mature form).

Belongs to the carbon-nitrogen hydrolase superfamily. BTD/VNN family. Monomer. Widely expressed with higher expression in spleen, kidney and blood. Overexpressed in lesional psoriatic skin.

It is found in the cell membrane. The catalysed reaction is (R)-pantetheine + H2O = cysteamine + (R)-pantothenate. Functionally, amidohydrolase that hydrolyzes specifically one of the carboamide linkages in D-pantetheine thus recycling pantothenic acid (vitamin B5) and releasing cysteamine. This is Pantetheinase (VNN1) from Homo sapiens (Human).